We begin with the raw amino-acid sequence, 916 residues long: MKTPAPGRIHSIVLVLLSLAVLQTSKAQKVQNDIDIYSLTVDSKVSSRFAHTVITSRVVNKADAVREATFQMELPKKAFITNFSMVIDGVTYPGNIKEKAAAQEQYSAAVARGESAGLVRATGRKTEQFQVSVSVAPAAKVTFELVYEELLARHLGAYELLLKVRPQQLVKHLQMDIHIFEPQGISFLETESTFMTNKLAEALTTSQNKTKAHVRFKPTLSQQQKYPEKQDTVIDGSFIVRYDVDRPLSGGSIQIENGYFVHYFAPDSLSTIPKNVIFVIDKSGSMMGRKIKQTREALIKILDDLSPHDQFDLISFSSEATTWKPLLVPASTENVNEAKSYATGIQAQGGTNINDAMLMAVQLLEKANQEELLPEGSITLIILLTDGDPTVGETNPLNIQKNVRKAINGQHSLFCLGFGFDVSYAFLEKMALENGGLARRIYEDSDSALQLQDFYQEVANPLMTSVAFEYPSNAVESVTQDTFRVFFKGSELVVAGKLREQSPDVLLAQIRGQLHRENITYMMMSHVAEQEEMFRSPKYIFHSFIERLWAYLTIQQLLEQMVSALDAEKQALEARALSLSLSYSFVTPLTSMVITKPEGQEQSQVAEKPVEDESRGSRVYLGPMRFGHSVGDRTSRKPGGGLKLLNGTPLFGPPGPPAAASPFHRMTSRLVLPELMSPLAPASAPSPTSGPGGASHDTDFRIKGTTPTALPFAPVQAPSVILPLPGQSVDRLCVDLRRPQELVNLLSDPDQGVEVTGHFETAKARFSWIEVTFENPQVQIHASPEHVVMTRNRRNSAYKWKETLYSVMPGLKVTMDKEGLLLLSRPDRVTIGLLFWDGPGKGLRLLLQNTDRFSSHVSGTLGQFYQDVLWGPLDTADDSKRTLKVQGRDYSATRELKLDYQESPPGKEISCWSVEL.

Positions 1-27 (MKTPAPGRIHSIVLVLLSLAVLQTSKA) are cleaved as a signal peptide. Residues 28–149 (QKVQNDIDIY…KVTFELVYEE (122 aa)) form the VIT domain. Residues N82 and N208 are each glycosylated (N-linked (GlcNAc...) asparagine). The VWFA domain maps to 275-458 (NVIFVIDKSG…LQLQDFYQEV (184 aa)). The N-linked (GlcNAc...) asparagine glycan is linked to N518. 2 disordered regions span residues 597–616 (PEGQEQSQVAEKPVEDESRG) and 678–701 (PLAPASAPSPTSGPGGASHDTDFR). The segment covering 678–689 (PLAPASAPSPTS) has biased composition (low complexity). Residue S683 is glycosylated (O-linked (GalNAc...) serine). 3 O-linked (GalNAc...) threonine glycosylation sites follow: T705, T706, and T708. C733 and C911 form a disulfide bridge.

The protein belongs to the ITIH family. In terms of assembly, interacts (via C-terminus) with DNAJC1 (via SANT 2 domain). Post-translationally, appears to be both N- and O-glycosylated.

It is found in the secreted. Functionally, type II acute-phase protein (APP) involved in inflammatory responses to trauma. May also play a role in liver development or regeneration. This Bos taurus (Bovine) protein is Inter-alpha-trypsin inhibitor heavy chain H4 (ITIH4).